A 36-amino-acid polypeptide reads, in one-letter code: Glucagon (36 aa).

The protein belongs to the glucagon family. In terms of tissue distribution, produced by the X-cells of the islets of pancreas.

Its subcellular location is the secreted. In terms of biological role, promotes hydrolysis of glycogen and lipids, and raises the blood sugar level. This chain is Glucagon (gcg), found in Hydrolagus colliei (Spotted ratfish).